Reading from the N-terminus, the 131-residue chain is MDTTTSNPRIEASAKYIRMSPHKARRVVDQIRGRAYEQAPMILEFMPYRVCDSISQLLSSAAANANHNFGLSKTDLFIDAIQVDGGSFLKRIRSGARGRTYPIHKPTCHITIVMRMDSGWRNKISLRRFGK.

This sequence belongs to the universal ribosomal protein uL22 family. Part of the 50S ribosomal subunit.

It is found in the plastid. Its function is as follows. This protein binds specifically to 23S rRNA. In terms of biological role, the globular domain of the protein is located near the polypeptide exit tunnel on the outside of the subunit, while an extended beta-hairpin is found that lines the wall of the exit tunnel in the center of the 70S ribosome. The chain is Large ribosomal subunit protein uL22c (rpl22) from Aneura mirabilis (Parasitic liverwort).